Here is a 465-residue protein sequence, read N- to C-terminus: GTPase Der (465 aa).

2 consecutive EngA-type G domains span residues 3-167 and 179-352; these read PLVA…PEEG and VRIA…ASAT. Residues 9–16, 57–61, 119–122, 185–192, 232–236, and 297–300 each bind GTP; these read GRPNVGKS, DTGGI, NKID, DTAGL, and NKWD. In terms of domain architecture, KH-like spans 353 to 437; that stretch reads HEFSTSEVNQ…PVRFIFREGA (85 aa).

The protein belongs to the TRAFAC class TrmE-Era-EngA-EngB-Septin-like GTPase superfamily. EngA (Der) GTPase family. As to quaternary structure, associates with the 50S ribosomal subunit.

Functionally, GTPase that plays an essential role in the late steps of ribosome biogenesis. In Xanthomonas campestris pv. campestris (strain 8004), this protein is GTPase Der.